The chain runs to 338 residues: Fructose-1,6-bisphosphatase class 1 (338 aa).

Mg(2+) contacts are provided by Glu90, Asp112, Leu114, and Asp115. Substrate-binding positions include Asp115–Ser118, Asn207, and Lys273. Mg(2+) is bound at residue Glu279.

This sequence belongs to the FBPase class 1 family. As to quaternary structure, homotetramer. Mg(2+) is required as a cofactor.

It is found in the cytoplasm. It catalyses the reaction beta-D-fructose 1,6-bisphosphate + H2O = beta-D-fructose 6-phosphate + phosphate. It functions in the pathway carbohydrate biosynthesis; gluconeogenesis. The protein is Fructose-1,6-bisphosphatase class 1 of Stenotrophomonas maltophilia (strain K279a).